The following is a 354-amino-acid chain: Guanine nucleotide-binding protein G(o) subunit alpha (354 aa).

A lipid anchor (N-myristoyl glycine) is attached at Gly-2. A lipid anchor (S-palmitoyl cysteine) is attached at Cys-3. Positions 32 to 354 (KDVKLLLLGA…ANNLRGCGLY (323 aa)) constitute a G-alpha domain. Residues 35 to 48 (KLLLLGAGESGKST) are G1 motif. 9 residues coordinate GTP: Glu-43, Lys-46, Ser-47, Thr-48, Ser-152, Leu-176, Arg-177, Thr-178, and Arg-179. Ser-47 contacts Mg(2+). A G2 motif region spans residues 174 to 182 (DILRTRVKT). Thr-182 is a Mg(2+) binding site. The segment at 197–206 (FRLFDVGGQR) is G3 motif. 5-glutamyl histamine is present on Gln-205. Residues 266 to 273 (ILFLNKKD) are G4 motif. GTP is bound by residues Asn-270, Asp-273, and Cys-325. The interval 324 to 329 (TCATDT) is G5 motif. Asn-346 bears the Deamidated asparagine; in form Alpha-3 mark. Cys-351 is lipidated: S-palmitoyl cysteine.

This sequence belongs to the G-alpha family. G(i/o/t/z) subfamily. In terms of assembly, g proteins are composed of 3 units; alpha, beta and gamma. The alpha chain contains the guanine nucleotide binding site. Forms a complex with GNB1 and GNG3. Interacts with RGS14. Interacts with RGS16. Interacts with RGS19. Interacts (when palmitoylated) with ADGRG3. Post-translationally, deamidation of Asn-346 converts alpha-1 to alpha-3. Histaminylated at Gln-205 residues by TGM2.

It localises to the cell membrane. The protein localises to the membrane. The catalysed reaction is GTP + H2O = GDP + phosphate + H(+). The GTPase activity is promoted by GTPAse activators, such as RGS14, RGS16 and RGS19. Guanine nucleotide-binding proteins (G proteins) function as transducers downstream of G protein-coupled receptors (GPCRs) in numerous signaling cascades. The alpha chain contains the guanine nucleotide binding site and alternates between an active, GTP-bound state and an inactive, GDP-bound state. Signaling by an activated GPCR promotes GDP release and GTP binding. The alpha subunit has a low GTPase activity that converts bound GTP to GDP, thereby terminating the signal. Both GDP release and GTP hydrolysis are modulated by numerous regulatory proteins. Signaling is mediated via effector proteins, such as adenylate cyclase. Inhibits adenylate cyclase activity, leading to decreased intracellular cAMP levels. This is Guanine nucleotide-binding protein G(o) subunit alpha (GNAO1) from Cricetulus longicaudatus (Long-tailed dwarf hamster).